Here is a 242-residue protein sequence, read N- to C-terminus: Probable transcriptional regulatory protein EUBREC_1961 (242 aa).

It belongs to the TACO1 family.

The protein localises to the cytoplasm. This is Probable transcriptional regulatory protein EUBREC_1961 from Agathobacter rectalis (strain ATCC 33656 / DSM 3377 / JCM 17463 / KCTC 5835 / VPI 0990) (Eubacterium rectale).